The following is a 461-amino-acid chain: Pup--protein ligase (461 aa).

Glutamate 9 is a binding site for Mg(2+). Arginine 53 is a binding site for ATP. Position 55 (tyrosine 55) interacts with Mg(2+). Aspartate 57 acts as the Proton acceptor in catalysis. Position 63 (glutamate 63) interacts with Mg(2+). The ATP site is built by threonine 66 and tryptophan 420.

This sequence belongs to the Pup ligase/Pup deamidase family. Pup-conjugating enzyme subfamily.

It catalyses the reaction ATP + [prokaryotic ubiquitin-like protein]-L-glutamate + [protein]-L-lysine = ADP + phosphate + N(6)-([prokaryotic ubiquitin-like protein]-gamma-L-glutamyl)-[protein]-L-lysine.. The protein operates within protein degradation; proteasomal Pup-dependent pathway. It functions in the pathway protein modification; protein pupylation. Catalyzes the covalent attachment of the prokaryotic ubiquitin-like protein modifier Pup to the proteasomal substrate proteins, thereby targeting them for proteasomal degradation. This tagging system is termed pupylation. The ligation reaction involves the side-chain carboxylate of the C-terminal glutamate of Pup and the side-chain amino group of a substrate lysine. The sequence is that of Pup--protein ligase from Renibacterium salmoninarum (strain ATCC 33209 / DSM 20767 / JCM 11484 / NBRC 15589 / NCIMB 2235).